A 940-amino-acid chain; its full sequence is Isoleucine--tRNA ligase (940 aa).

The 'HIGH' region motif lies at 58–68 (PYANGSIHIGH). An L-isoleucyl-5'-AMP-binding site is contributed by glutamate 564. Residues 605–609 (KMSKS) carry the 'KMSKS' region motif. An ATP-binding site is contributed by lysine 608. Cysteine 903, cysteine 906, cysteine 923, and cysteine 926 together coordinate Zn(2+).

It belongs to the class-I aminoacyl-tRNA synthetase family. IleS type 1 subfamily. As to quaternary structure, monomer. Zn(2+) serves as cofactor.

The protein resides in the cytoplasm. It catalyses the reaction tRNA(Ile) + L-isoleucine + ATP = L-isoleucyl-tRNA(Ile) + AMP + diphosphate. Its function is as follows. Catalyzes the attachment of isoleucine to tRNA(Ile). As IleRS can inadvertently accommodate and process structurally similar amino acids such as valine, to avoid such errors it has two additional distinct tRNA(Ile)-dependent editing activities. One activity is designated as 'pretransfer' editing and involves the hydrolysis of activated Val-AMP. The other activity is designated 'posttransfer' editing and involves deacylation of mischarged Val-tRNA(Ile). The protein is Isoleucine--tRNA ligase of Shewanella baltica (strain OS195).